The sequence spans 71 residues: Prokaryotic ubiquitin-like protein Pup (71 aa).

Positions 1-30 are disordered; that stretch reads MPSASGHHQIPAETQRHDDDQTQETAQGLS. A coiled-coil region spans residues 23-56; it reads QETAQGLSAAAMLAQEQADDLDAILDDIETVLET. The tract at residues 27–65 is ARC ATPase binding; that stretch reads QGLSAAAMLAQEQADDLDAILDDIETVLETNAEEYVSSF. Glu-71 is covalently cross-linked (Isoglutamyl lysine isopeptide (Glu-Lys) (interchain with K-? in acceptor proteins)).

Belongs to the prokaryotic ubiquitin-like protein family. In terms of assembly, strongly interacts with the proteasome-associated ATPase ARC through a hydrophobic interface; the interacting region of Pup lies in its C-terminal half. There is one Pup binding site per ARC hexamer ring.

Its pathway is protein degradation; proteasomal Pup-dependent pathway. In terms of biological role, protein modifier that is covalently attached to lysine residues of substrate proteins, thereby targeting them for proteasomal degradation. The tagging system is termed pupylation. This is Prokaryotic ubiquitin-like protein Pup from Bifidobacterium animalis subsp. lactis (strain AD011).